The primary structure comprises 448 residues: Zinc finger and BTB domain-containing protein 44 (448 aa).

One can recognise a BTB domain in the interval 31-98 (CDITIRVQDK…AYTATLSINT (68 aa)). Residues 289–298 (LSDEEVHEEV) show a composition bias toward basic and acidic residues. The segment at 289–320 (LSDEEVHEEVSQPVSASQSSMSDQQTVPGSEQ) is disordered. Residues 299-313 (SQPVSASQSSMSDQQ) are compositionally biased toward low complexity. 2 consecutive C2H2-type zinc fingers follow at residues 394 to 416 (FQCP…MLIH) and 422 to 444 (FQCD…RLKH).

It is found in the nucleus. In Xenopus tropicalis (Western clawed frog), this protein is Zinc finger and BTB domain-containing protein 44 (zbtb44).